A 425-amino-acid chain; its full sequence is Enolase (425 aa).

(2R)-2-phosphoglycerate is bound at residue glutamine 161. Glutamate 203 serves as the catalytic Proton donor. 3 residues coordinate Mg(2+): aspartate 240, glutamate 283, and aspartate 310. The (2R)-2-phosphoglycerate site is built by lysine 335, arginine 364, serine 365, and lysine 386. Lysine 335 functions as the Proton acceptor in the catalytic mechanism.

Belongs to the enolase family. As to quaternary structure, component of the RNA degradosome, a multiprotein complex involved in RNA processing and mRNA degradation. The cofactor is Mg(2+).

The protein localises to the cytoplasm. It localises to the secreted. The protein resides in the cell surface. It catalyses the reaction (2R)-2-phosphoglycerate = phosphoenolpyruvate + H2O. The protein operates within carbohydrate degradation; glycolysis; pyruvate from D-glyceraldehyde 3-phosphate: step 4/5. Catalyzes the reversible conversion of 2-phosphoglycerate (2-PG) into phosphoenolpyruvate (PEP). It is essential for the degradation of carbohydrates via glycolysis. The sequence is that of Enolase from Ruthia magnifica subsp. Calyptogena magnifica.